Here is a 505-residue protein sequence, read N- to C-terminus: Maturase K (505 aa).

The protein belongs to the intron maturase 2 family. MatK subfamily.

Its subcellular location is the plastid. The protein localises to the chloroplast. In terms of biological role, usually encoded in the trnK tRNA gene intron. Probably assists in splicing its own and other chloroplast group II introns. This Ulmus parvifolia (Chinese elm) protein is Maturase K.